The primary structure comprises 239 residues: Ribonuclease 3 (239 aa).

One can recognise an RNase III domain in the interval H11–D133. Position 46 (E46) interacts with Mg(2+). D50 is a catalytic residue. Positions 119 and 122 each coordinate Mg(2+). Residue E122 is part of the active site. In terms of domain architecture, DRBM spans D160–E230.

It belongs to the ribonuclease III family. In terms of assembly, homodimer. Requires Mg(2+) as cofactor.

The protein localises to the cytoplasm. The enzyme catalyses Endonucleolytic cleavage to 5'-phosphomonoester.. In terms of biological role, digests double-stranded RNA. Involved in the processing of primary rRNA transcript to yield the immediate precursors to the large and small rRNAs (23S and 16S). Also processes some mRNAs, and tRNAs when they are encoded in the rRNA operon. Its function is as follows. CRISPR (clustered regularly interspaced short palindromic repeat) is an adaptive immune system that provides protection against mobile genetic elements (viruses, transposable elements and conjugative plasmids). CRISPR clusters contain spacers, sequences complementary to antecedent mobile elements, and target invading nucleic acids. CRISPR clusters are transcribed and processed into CRISPR RNA (crRNA). In this organism endogenous ribonuclease 3 and Cas9 are required for correct coprocessing of pre-crRNA and the trans-encoded small RNA (tracrRNA). Cas9, crRNA and tracrRNA are required for cleavage of invading DNA. Complements pre-crRNA and tracrRNA coprocessing defects in an rnc deletion in S.pyogenes strain 370. The protein is Ribonuclease 3 of Neisseria meningitidis serogroup A / serotype 4A (strain DSM 15465 / Z2491).